The sequence spans 179 residues: Large ribosomal subunit protein uL5 (179 aa).

Belongs to the universal ribosomal protein uL5 family. In terms of assembly, part of the 50S ribosomal subunit; part of the 5S rRNA/L5/L18/L25 subcomplex. Contacts the 5S rRNA and the P site tRNA. Forms a bridge to the 30S subunit in the 70S ribosome.

Functionally, this is one of the proteins that bind and probably mediate the attachment of the 5S RNA into the large ribosomal subunit, where it forms part of the central protuberance. In the 70S ribosome it contacts protein S13 of the 30S subunit (bridge B1b), connecting the 2 subunits; this bridge is implicated in subunit movement. Contacts the P site tRNA; the 5S rRNA and some of its associated proteins might help stabilize positioning of ribosome-bound tRNAs. The sequence is that of Large ribosomal subunit protein uL5 from Photobacterium profundum (strain SS9).